A 620-amino-acid chain; its full sequence is Proline--tRNA ligase (620 aa).

This sequence belongs to the class-II aminoacyl-tRNA synthetase family. ProS type 1 subfamily. In terms of assembly, homodimer.

Its subcellular location is the cytoplasm. The catalysed reaction is tRNA(Pro) + L-proline + ATP = L-prolyl-tRNA(Pro) + AMP + diphosphate. In terms of biological role, catalyzes the attachment of proline to tRNA(Pro) in a two-step reaction: proline is first activated by ATP to form Pro-AMP and then transferred to the acceptor end of tRNA(Pro). As ProRS can inadvertently accommodate and process non-cognate amino acids such as alanine and cysteine, to avoid such errors it has two additional distinct editing activities against alanine. One activity is designated as 'pretransfer' editing and involves the tRNA(Pro)-independent hydrolysis of activated Ala-AMP. The other activity is designated 'posttransfer' editing and involves deacylation of mischarged Ala-tRNA(Pro). The misacylated Cys-tRNA(Pro) is not edited by ProRS. The protein is Proline--tRNA ligase of Streptococcus suis (strain 98HAH33).